Here is a 987-residue protein sequence, read N- to C-terminus: AP3-complex subunit beta-A (987 aa).

The interval 586–662 is disordered; the sequence is QDQLSDLDKQ…ISETSVSADQ (77 aa). Residues 603 to 613 are compositionally biased toward acidic residues; that stretch reads DGSEESSETGD. The span at 614 to 631 shows a compositional bias: low complexity; it reads ENGSSDYDSESSNGSDFS.

This sequence belongs to the adaptor complexes large subunit family. In terms of assembly, adaptor protein complex 3 (AP-3) is a heterotetramer composed of two large adaptins (delta-type subunit and beta-type subunit), a medium adaptin (mu-type subunit) and a small adaptin (sigma-type subunit).

Its subcellular location is the cytoplasm. It localises to the golgi apparatus. It is found in the cytoplasmic vesicle membrane. Its function is as follows. Part of the AP-3 complex, an adaptor-related complex which seems to be clathrin-associated. The complex is associated with the Golgi region as well as more peripheral structures. It facilitates the budding of vesicles from the Golgi membrane and may be directly involved in trafficking to the vacuole. It also function in maintaining the identity of lytic vacuoles and in regulating the transition between storage and lytic vacuoles. This is AP3-complex subunit beta-A (AP3BA) from Arabidopsis thaliana (Mouse-ear cress).